Reading from the N-terminus, the 389-residue chain is Mesotocin receptor (389 aa).

The Extracellular portion of the chain corresponds to 1–50 (MEGLCLNLDCSELPNSSWVNSSMENQNHSSNSTRDPLKRNEEVAKVEVTV). Asn-15, Asn-20, Asn-27, and Asn-31 each carry an N-linked (GlcNAc...) asparagine glycan. The helical transmembrane segment at 51 to 71 (LALILFLALAGNICVLLGIYI) threads the bilayer. Topologically, residues 72 to 87 (NRHKHSRMYFFMKHLS) are cytoplasmic. Residues 88–108 (IADLVVAIFQVLPQLIWDITF) traverse the membrane as a helical segment. The Extracellular segment spans residues 109 to 119 (RFYAPDLVCRL). Cys-117 and Cys-192 are disulfide-bonded. A helical membrane pass occupies residues 120 to 140 (VTYLQVVGMFASTYMLLLMSL). The Cytoplasmic portion of the chain corresponds to 141 to 159 (DRCLAICQPLRSLHRRSDC). A helical membrane pass occupies residues 160-180 (VYVLFTWILSFLLSTPQTVIF). The Extracellular portion of the chain corresponds to 181 to 207 (SLTEVGNGVYDCRADFIQPWGPKAYIT). The helical transmembrane segment at 208–228 (WITLAVYIIPVMILSVCYGLI) threads the bilayer. The Cytoplasmic segment spans residues 229 to 275 (SYKIWQNIRLKTVCESNLRLSTSRRATLSRVSSVRLISKAKIRTVKM). The helical transmembrane segment at 276–296 (TFIIVLAYIVCWTPFFFVQMW) threads the bilayer. At 297 to 308 (SVWDPNPPKEAS) the chain is on the extracellular side. Residues 309–329 (LFIIAMLLGSLNSCCNPWIYM) traverse the membrane as a helical segment. Residues 330–389 (LFTGHLFHDLLQSFLCCSARYLKTQQQGSDLSASRKSNSSTFVLSRKSSSQKSITQPSTA) are Cytoplasmic-facing. The disordered stretch occupies residues 360–389 (LSASRKSNSSTFVLSRKSSSQKSITQPSTA).

It belongs to the G-protein coupled receptor 1 family. Vasopressin/oxytocin receptor subfamily. As to expression, highly expressed in the bladder. Also expressed in kidney, brain and skeletal muscle.

It localises to the cell membrane. Binds to mesotocin and may play a role in the regulation of water and salt transport. The protein is Mesotocin receptor of Rhinella marina (Cane toad).